Consider the following 141-residue polypeptide: Hemoglobin subunit alpha (141 aa).

The region spanning 1–141 (VLSANDKSNV…VSTVLTSKYR (141 aa)) is the Globin domain. A Phosphoserine modification is found at Ser3. 2 positions are modified to N6-succinyllysine: Lys7 and Lys11. An N6-acetyllysine; alternate modification is found at Lys16. At Lys16 the chain carries N6-succinyllysine; alternate. Tyr24 is modified (phosphotyrosine). At Ser35 the chain carries Phosphoserine. Lys40 carries the post-translational modification N6-succinyllysine. Ser49 carries the post-translational modification Phosphoserine. An O2-binding site is contributed by His58. Residue His87 participates in heme b binding. Ser102 bears the Phosphoserine mark. Position 108 is a phosphothreonine (Thr108). Ser124 is modified (phosphoserine). Residues Thr134 and Thr137 each carry the phosphothreonine modification. Phosphoserine is present on Ser138.

It belongs to the globin family. Heterotetramer of two alpha chains and two beta chains. In terms of tissue distribution, red blood cells.

In terms of biological role, involved in oxygen transport from the lung to the various peripheral tissues. Its function is as follows. Hemopressin acts as an antagonist peptide of the cannabinoid receptor CNR1. Hemopressin-binding efficiently blocks cannabinoid receptor CNR1 and subsequent signaling. The sequence is that of Hemoglobin subunit alpha (HBA) from Hippopotamus amphibius (Hippopotamus).